Reading from the N-terminus, the 111-residue chain is Thiosulfate sulfurtransferase GlpE (111 aa).

The Rhodanese domain occupies 16-104 (QTENAVLLDV…WQRAGLPMET (89 aa)). Residue Cys64 is the Cysteine persulfide intermediate of the active site.

The protein belongs to the GlpE family.

It is found in the cytoplasm. The catalysed reaction is thiosulfate + hydrogen cyanide = thiocyanate + sulfite + 2 H(+). It catalyses the reaction thiosulfate + [thioredoxin]-dithiol = [thioredoxin]-disulfide + hydrogen sulfide + sulfite + 2 H(+). Functionally, transferase that catalyzes the transfer of sulfur from thiosulfate to thiophilic acceptors such as cyanide or dithiols. May function in a CysM-independent thiosulfate assimilation pathway by catalyzing the conversion of thiosulfate to sulfite, which can then be used for L-cysteine biosynthesis. The protein is Thiosulfate sulfurtransferase GlpE of Actinobacillus succinogenes (strain ATCC 55618 / DSM 22257 / CCUG 43843 / 130Z).